A 422-amino-acid chain; its full sequence is Light-independent protochlorophyllide reductase subunit N (422 aa).

Cysteine 26, cysteine 51, and cysteine 112 together coordinate [4Fe-4S] cluster.

The protein belongs to the BchN/ChlN family. Protochlorophyllide reductase is composed of three subunits; BchL, BchN and BchB. Forms a heterotetramer of two BchB and two BchN subunits. It depends on [4Fe-4S] cluster as a cofactor.

It carries out the reaction chlorophyllide a + oxidized 2[4Fe-4S]-[ferredoxin] + 2 ADP + 2 phosphate = protochlorophyllide a + reduced 2[4Fe-4S]-[ferredoxin] + 2 ATP + 2 H2O. The protein operates within porphyrin-containing compound metabolism; bacteriochlorophyll biosynthesis (light-independent). Functionally, component of the dark-operative protochlorophyllide reductase (DPOR) that uses Mg-ATP and reduced ferredoxin to reduce ring D of protochlorophyllide (Pchlide) to form chlorophyllide a (Chlide). This reaction is light-independent. The NB-protein (BchN-BchB) is the catalytic component of the complex. The polypeptide is Light-independent protochlorophyllide reductase subunit N (Acidiphilium rubrum).